The primary structure comprises 182 residues: Adenine phosphoribosyltransferase (182 aa).

It belongs to the purine/pyrimidine phosphoribosyltransferase family. As to quaternary structure, homodimer.

Its subcellular location is the cytoplasm. The enzyme catalyses AMP + diphosphate = 5-phospho-alpha-D-ribose 1-diphosphate + adenine. The protein operates within purine metabolism; AMP biosynthesis via salvage pathway; AMP from adenine: step 1/1. Functionally, catalyzes a salvage reaction resulting in the formation of AMP, that is energically less costly than de novo synthesis. In Bordetella pertussis (strain Tohama I / ATCC BAA-589 / NCTC 13251), this protein is Adenine phosphoribosyltransferase.